Here is a 42-residue protein sequence, read N- to C-terminus: Potassium channel toxin gamma-KTx 1.5 (42 aa).

4 disulfides stabilise this stretch: Cys-5-Cys-23, Cys-11-Cys-34, Cys-20-Cys-39, and Cys-24-Cys-41.

It belongs to the ergtoxin family. Gamma-KTx 1 subfamily. As to expression, expressed by the venom gland.

Its subcellular location is the secreted. Blocks Kv11/ERG potassium channels. The chain is Potassium channel toxin gamma-KTx 1.5 from Centruroides limpidus (Mexican scorpion).